The sequence spans 111 residues: Small ribosomal subunit protein bS16 (111 aa).

It belongs to the bacterial ribosomal protein bS16 family.

This Rickettsia africae (strain ESF-5) protein is Small ribosomal subunit protein bS16.